The following is a 336-amino-acid chain: Potassium channel subfamily K member 1 (336 aa).

Topologically, residues Met1–Ala20 are cytoplasmic. Residues Trp21–Phe41 form a helical membrane-spanning segment. The Extracellular portion of the chain corresponds to Ser42–Asp103. Asn95 carries an N-linked (GlcNAc...) asparagine glycan. Residues Phe104–Ser116 constitute an intramembrane region (helical). An intramembrane segment occupies Thr117 to His122. The selectivity filter 1 stretch occupies residues Thr117–His122. Residues Thr123–Ala132 lie on the Extracellular side of the membrane. The helical transmembrane segment at Phe133–Val156 threads the bilayer. The Cytoplasmic portion of the chain corresponds to Thr157–Ile181. The chain crosses the membrane as a helical span at residues Val182 to Val202. Topologically, residues Phe203–Asn211 are extracellular. An intramembrane region (helical) is located at residues Phe212–Ser224. Positions Thr225–Asp230 are selectivity filter 2. An intramembrane segment occupies Thr225–Tyr231. The Extracellular segment spans residues Val232 to Glu243. Residues Leu244–Phe267 traverse the membrane as a helical segment. Residues Cys268 to His336 lie on the Cytoplasmic side of the membrane. Lys274 participates in a covalent cross-link: Glycyl lysine isopeptide (Lys-Gly) (interchain with G-Cter in SUMO). The tract at residues Ile293–Leu299 is important for intracellular retention in recycling endosomes. The interval Gln307–His336 is disordered.

Belongs to the two pore domain potassium channel (TC 1.A.1.8) family. Homodimer; disulfide-linked. Heterodimer with KCNK2; disulfide-linked. In astrocytes, forms mostly heterodimeric potassium channels with KCNK2, with only a minor proportion of functional channels containing homodimeric KCNK1. Interacts with KCNK3 and KCNK9, forming functional heterodimeric channels. Interacts with GNG4. Identified in a complex with PSD and ARF6; interacts only with PSD that is bound to ARF6. Interacts with UBE2I. Post-translationally, sumoylation is controversial. Sumoylated by UBE2I. Not sumoylated when expressed in xenopus oocytes or mammalian cells. Sumoylation inactivates the channel, but does not interfere with expression at the cell membrane. Sumoylation of a single subunit is sufficient to silence the dimeric channel. Sumoylation of KCNK1 is sufficient to silence heterodimeric channels formed by KCNK1 and KCNK3 or KCNK9. Desumoylated by SENP1; this activates the channel. Desumoylated by SENP1; this strongly increases halothane-mediated activation of heterodimeric channels formed with KCNK9. SENP1 treatment has no effect.

The protein localises to the cell membrane. The protein resides in the recycling endosome. It localises to the synaptic cell membrane. It is found in the cytoplasmic vesicle. Its subcellular location is the perikaryon. The protein localises to the cell projection. The protein resides in the dendrite. It localises to the apical cell membrane. It catalyses the reaction K(+)(in) = K(+)(out). The enzyme catalyses NH4(+)(in) = NH4(+)(out). The catalysed reaction is Na(+)(in) = Na(+)(out). It carries out the reaction Rb(+)(in) = Rb(+)(out). It catalyses the reaction Cs(+)(in) = Cs(+)(out). The enzyme catalyses Li(+)(in) = Li(+)(out). The catalysed reaction is L-glutamate(out) = L-glutamate(in). It carries out the reaction chloride(in) = chloride(out). In terms of biological role, ion channel that contributes to passive transmembrane potassium transport and to the regulation of the resting membrane potential in brain astrocytes, but also in kidney and in other tissues. Forms dimeric channels through which potassium ions pass in accordance with their electrochemical gradient. The channel is selective for K(+) ions at physiological potassium concentrations and at neutral pH, but becomes permeable to Na(+) at subphysiological K(+) levels and upon acidification of the extracellular medium. The homodimer has very low potassium channel activity, when expressed in heterologous systems, and can function as weakly inward rectifying potassium channel. Channel activity is modulated by activation of serotonin receptors. Heterodimeric channels containing KCNK1 and KCNK2 have much higher activity, and may represent the predominant form in astrocytes. Heterodimeric channels containing KCNK1 and KCNK3 or KCNK9 have much higher activity. Heterodimeric channels formed by KCNK1 and KCNK9 may contribute to halothane-sensitive currents. Mediates outward rectifying potassium currents in dentate gyrus granule cells and contributes to the regulation of their resting membrane potential. Contributes to the regulation of action potential firing in dentate gyrus granule cells and down-regulates their intrinsic excitability. In astrocytes, the heterodimer formed by KCNK1 and KCNK2 is required for rapid glutamate release in response to activation of G-protein coupled receptors, such as F2R and CNR1. Required for normal ion and water transport in the kidney. Contributes to the regulation of the resting membrane potential of pancreatic beta cells. The low channel activity of homodimeric KCNK1 may be due to sumoylation. The low channel activity may be due to rapid internalization from the cell membrane and retention in recycling endosomes. Permeable to monovalent cations with ion selectivity for K(+) &gt; Rb(+) &gt;&gt; NH4(+) &gt;&gt; Cs(+) = Na(+) = Li(+). This chain is Potassium channel subfamily K member 1, found in Bos taurus (Bovine).